We begin with the raw amino-acid sequence, 484 residues long: Protein DETOXIFICATION 33 (484 aa).

Over residues 1–16 (MGKDKTLPLLDPREPP) the composition is skewed to basic and acidic residues. Residues 1–22 (MGKDKTLPLLDPREPPELTGTK) form a disordered region. The next 12 membrane-spanning stretches (helical) occupy residues 39-59 (LWEL…LGAL), 81-101 (VISG…ETLC), 122-142 (VILF…PPIL), 155-175 (AGKF…NFPI), 190-210 (WISG…ILYF), 218-238 (AITL…YILI), 267-287 (ALML…TGLL), 294-314 (VDAI…SIGF), 338-358 (VIVV…VVLA), 380-400 (IAVL…LSGV), 409-429 (LVAY…GLVL), and 439-459 (GIWG…IGII).

It belongs to the multi antimicrobial extrusion (MATE) (TC 2.A.66.1) family.

The protein localises to the membrane. The protein is Protein DETOXIFICATION 33 of Arabidopsis thaliana (Mouse-ear cress).